The primary structure comprises 975 residues: Glycine dehydrogenase (decarboxylating) (975 aa).

K723 is modified (N6-(pyridoxal phosphate)lysine).

Belongs to the GcvP family. The glycine cleavage system is composed of four proteins: P, T, L and H. Pyridoxal 5'-phosphate is required as a cofactor.

The enzyme catalyses N(6)-[(R)-lipoyl]-L-lysyl-[glycine-cleavage complex H protein] + glycine + H(+) = N(6)-[(R)-S(8)-aminomethyldihydrolipoyl]-L-lysyl-[glycine-cleavage complex H protein] + CO2. The glycine cleavage system catalyzes the degradation of glycine. The P protein binds the alpha-amino group of glycine through its pyridoxal phosphate cofactor; CO(2) is released and the remaining methylamine moiety is then transferred to the lipoamide cofactor of the H protein. In Burkholderia multivorans (strain ATCC 17616 / 249), this protein is Glycine dehydrogenase (decarboxylating).